A 331-amino-acid polypeptide reads, in one-letter code: Methionyl-tRNA formyltransferase (331 aa).

111 to 114 (SLLP) provides a ligand contact to (6S)-5,6,7,8-tetrahydrofolate.

The protein belongs to the Fmt family.

The enzyme catalyses L-methionyl-tRNA(fMet) + (6R)-10-formyltetrahydrofolate = N-formyl-L-methionyl-tRNA(fMet) + (6S)-5,6,7,8-tetrahydrofolate + H(+). Functionally, attaches a formyl group to the free amino group of methionyl-tRNA(fMet). The formyl group appears to play a dual role in the initiator identity of N-formylmethionyl-tRNA by promoting its recognition by IF2 and preventing the misappropriation of this tRNA by the elongation apparatus. This is Methionyl-tRNA formyltransferase from Thermosynechococcus vestitus (strain NIES-2133 / IAM M-273 / BP-1).